We begin with the raw amino-acid sequence, 602 residues long: Potassium-transporting ATPase potassium-binding subunit (602 aa).

Helical transmembrane passes span 5–25 (AMLQ…PLGA), 65–85 (GYAV…YALQ), 136–156 (GLTV…IALI), and 179–199 (LYVL…QGAI). The tract at residues 221–248 (QDAKGNPVLGKDGKPVMEDKTSQTQTLP) is disordered. A compositionally biased stretch (basic and acidic residues) spans 231 to 241 (KDGKPVMEDKT). Helical transmembrane passes span 283–303 (LANF…CFLF), 312–332 (QGWA…VVET), 419–439 (GLYG…LMVG), 458–478 (AITI…AVSL), 523–543 (IMTG…ILAI), and 566–586 (LFVT…YVPA).

This sequence belongs to the KdpA family. In terms of assembly, the system is composed of three essential subunits: KdpA, KdpB and KdpC.

It is found in the cell inner membrane. Part of the high-affinity ATP-driven potassium transport (or Kdp) system, which catalyzes the hydrolysis of ATP coupled with the electrogenic transport of potassium into the cytoplasm. This subunit binds the periplasmic potassium ions and delivers the ions to the membrane domain of KdpB through an intramembrane tunnel. This is Potassium-transporting ATPase potassium-binding subunit from Chromobacterium violaceum (strain ATCC 12472 / DSM 30191 / JCM 1249 / CCUG 213 / NBRC 12614 / NCIMB 9131 / NCTC 9757 / MK).